A 271-amino-acid polypeptide reads, in one-letter code: Inactive phospholipid phosphatase 7 (271 aa).

Residues M1 to P66 form a disordered region. Over M1–M112 the chain is Cytoplasmic. Phosphoserine occurs at positions 43 and 62. Positions C70 to C91 are interaction with MTOR. A helical transmembrane segment spans residues V113 to L133. The Extracellular portion of the chain corresponds to V134–G141. Residues Q142–V162 traverse the membrane as a helical segment. The Cytoplasmic segment spans residues Q163–K202. A helical membrane pass occupies residues F203 to L223. At C224–D239 the chain is on the extracellular side. Residues V240–P260 traverse the membrane as a helical segment. Residues S261–W271 are Cytoplasmic-facing.

Belongs to the PA-phosphatase related phosphoesterase family. As to quaternary structure, homo and heterooligomer. Interacts with MTOR; controls MTOR-dependent IGF2 expression during myoblast differentiation.

Its subcellular location is the nucleus envelope. It is found in the endoplasmic reticulum membrane. The protein resides in the membrane. Its function is as follows. Plays a role as negative regulator of myoblast differentiation, in part through effects on MTOR signaling. Has no detectable enzymatic activity. The polypeptide is Inactive phospholipid phosphatase 7 (Homo sapiens (Human)).